Consider the following 302-residue polypeptide: N-acetylaspartate synthetase (302 aa).

The span at 46–60 (PGPAAAPPAPPPAPV) shows a compositional bias: pro residues. Residues 46-72 (PGPAAAPPAPPPAPVAQPHGGAGGAGP) form a disordered region. A helical membrane pass occupies residues 121–141 (YALLAALCFAVSRSLLLTCLV). The 141-residue stretch at 143–283 (AALLGLRYYY…VLPGMTLSLA (141 aa)) folds into the N-acetyltransferase domain.

The protein belongs to the NAT8 family. As to expression, expressed in brain.

It is found in the cytoplasm. It localises to the microsome membrane. The protein resides in the mitochondrion membrane. The protein localises to the endoplasmic reticulum membrane. It carries out the reaction L-aspartate + acetyl-CoA = N-acetyl-L-aspartate + CoA + H(+). Aminooxyacetic acid (AOAA) blocks its activity in both cytoplasm and mitochondria. Catalyzes the synthesis of N-acetylaspartate acid (NAA) from L-aspartate and acetyl-CoA. Promotes dopamine uptake by regulating TNF-alpha expression. Attenuates methamphetamine-induced inhibition of dopamine uptake. The protein is N-acetylaspartate synthetase of Homo sapiens (Human).